A 124-amino-acid chain; its full sequence is Fluoride-specific ion channel FluC (124 aa).

4 helical membrane-spanning segments follow: residues 4 to 24 (VLYI…ISIL), 35 to 55 (FGTL…YALA), 60 to 80 (IGPE…TTFS), and 100 to 120 (LNVL…QQLI). 2 residues coordinate Na(+): Gly74 and Thr77.

Belongs to the fluoride channel Fluc/FEX (TC 1.A.43) family.

Its subcellular location is the cell inner membrane. The enzyme catalyses fluoride(in) = fluoride(out). Its activity is regulated as follows. Na(+) is not transported, but it plays an essential structural role and its presence is essential for fluoride channel function. In terms of biological role, fluoride-specific ion channel. Important for reducing fluoride concentration in the cell, thus reducing its toxicity. This is Fluoride-specific ion channel FluC from Shewanella amazonensis (strain ATCC BAA-1098 / SB2B).